The sequence spans 360 residues: Phospho-N-acetylmuramoyl-pentapeptide-transferase (360 aa).

10 consecutive transmembrane segments (helical) span residues 26-46, 74-94, 97-117, 134-154, 168-188, 199-219, 236-256, 263-283, 288-308, and 338-358; these read AILG…KLIE, MGGL…GDLG, YVWV…IDDY, YILQ…TAAN, VMPQ…VGSS, GLAI…AYLS, SGEL…FLWF, VFMG…IAVL, ILLV…ILQV, and VIVR…ATLK.

This sequence belongs to the glycosyltransferase 4 family. MraY subfamily. Mg(2+) serves as cofactor.

It is found in the cell inner membrane. It catalyses the reaction UDP-N-acetyl-alpha-D-muramoyl-L-alanyl-gamma-D-glutamyl-meso-2,6-diaminopimeloyl-D-alanyl-D-alanine + di-trans,octa-cis-undecaprenyl phosphate = di-trans,octa-cis-undecaprenyl diphospho-N-acetyl-alpha-D-muramoyl-L-alanyl-D-glutamyl-meso-2,6-diaminopimeloyl-D-alanyl-D-alanine + UMP. Its pathway is cell wall biogenesis; peptidoglycan biosynthesis. In terms of biological role, catalyzes the initial step of the lipid cycle reactions in the biosynthesis of the cell wall peptidoglycan: transfers peptidoglycan precursor phospho-MurNAc-pentapeptide from UDP-MurNAc-pentapeptide onto the lipid carrier undecaprenyl phosphate, yielding undecaprenyl-pyrophosphoryl-MurNAc-pentapeptide, known as lipid I. The sequence is that of Phospho-N-acetylmuramoyl-pentapeptide-transferase from Shewanella putrefaciens (strain CN-32 / ATCC BAA-453).